The chain runs to 446 residues: Transcription factor Sox-10 (446 aa).

Disordered stretches follow at residues 1–60 (MSDD…SEDE), 153–191 (RLRM…AEGG), and 203–264 (HLDH…IDFG). A compositionally biased stretch (acidic residues) spans 36-48 (DDDDDDDEEEEEE). Lysine 52 participates in a covalent cross-link: Glycyl lysine isopeptide (Lys-Gly) (interchain with G-Cter in SUMO). The segment at 56-96 (DSEDERFPVCIREAVSQVLNGYDWTLVPMPVRVNGGSKSKP) is dimerization (DIM). The HMG box DNA-binding region spans 98–166 (VKRPMNAFMV…QHKKDHPDYK (69 aa)). Residues 153–167 (RLRMQHKKDHPDYKY) are compositionally biased toward basic and acidic residues. Residues 213–226 (SDGNSEHSTGQSHG) show a composition bias toward polar residues. The interval 217 to 303 (SEHSTGQSHG…NGHAGHPSHI (87 aa)) is transactivation domain (TAM). Positions 243–257 (SDGKRDGSHALREGG) are enriched in basic and acidic residues. The segment at 337 to 446 (KAQVKTESSS…QPVYTTLSRP (110 aa)) is transactivation domain (TAC). A Glycyl lysine isopeptide (Lys-Gly) (interchain with G-Cter in SUMO) cross-link involves residue lysine 341. The tract at residues 421–446 (SDPPSVAQSHSPTHWEQPVYTTLSRP) is disordered. Over residues 426–446 (VAQSHSPTHWEQPVYTTLSRP) the composition is skewed to polar residues.

Interacts with the sumoylation factors ube2i/ubc9 and sumo1. Sumoylated. First expressed at stages 13/14 at the lateral edges of the neural plate, in the neural crest forming region. By stage 22, neural crest cells migrate in the cranial region and strong expression is seen in the crest cells that populate the branchial arches as well as those migrating in the frontonasal region. Also strongly expressed in the trunk neural crest. Expression in the otic vesicle begins around stage 25 and persists until at least stage 40. At stage 30, expression is down-regulated in the cranial neural crest of the pharyngeal arches but persists in the trunk neural crest, in the otic vesicle and in discrete domains adjacent to the hindbrain. At stage 40, expression is restricted to the otic vesicle, differentiated pigment cells, and in several cranial ganglia.

The protein localises to the cytoplasm. It is found in the nucleus. Acts early in neural crest formation, functioning redundantly with the other group E Sox factors sox8 and sox9 to induce neural crest progenitors. Acts downstream of wnt-signaling at the neural plate border. Involved in the specification of neural crest progenitors fated to form the pigment cell lineage. This Xenopus laevis (African clawed frog) protein is Transcription factor Sox-10 (sox10).